Consider the following 498-residue polypeptide: ATP synthase subunit beta, chloroplastic (498 aa).

172 to 179 (GGAGVGKT) is an ATP binding site.

The protein belongs to the ATPase alpha/beta chains family. F-type ATPases have 2 components, CF(1) - the catalytic core - and CF(0) - the membrane proton channel. CF(1) has five subunits: alpha(3), beta(3), gamma(1), delta(1), epsilon(1). CF(0) has four main subunits: a(1), b(1), b'(1) and c(9-12).

It localises to the plastid. The protein localises to the chloroplast thylakoid membrane. It catalyses the reaction ATP + H2O + 4 H(+)(in) = ADP + phosphate + 5 H(+)(out). Its function is as follows. Produces ATP from ADP in the presence of a proton gradient across the membrane. The catalytic sites are hosted primarily by the beta subunits. This chain is ATP synthase subunit beta, chloroplastic, found in Nicotiana sylvestris (Wood tobacco).